The following is a 176-amino-acid chain: Large ribosomal subunit protein uL6 (176 aa).

Belongs to the universal ribosomal protein uL6 family. As to quaternary structure, part of the 50S ribosomal subunit.

Functionally, this protein binds to the 23S rRNA, and is important in its secondary structure. It is located near the subunit interface in the base of the L7/L12 stalk, and near the tRNA binding site of the peptidyltransferase center. The polypeptide is Large ribosomal subunit protein uL6 (Burkholderia cenocepacia (strain HI2424)).